The chain runs to 755 residues: ABC transporter G family member 2 (755 aa).

In terms of domain architecture, ABC transporter spans 98-358 (LSFTDLTYSV…FSEFKHPIPE (261 aa)). 151-158 (GASGSGKS) lines the ATP pocket. The ABC transmembrane type-2 domain occupies 449 to 659 (IEMIVIGKRA…PYEGVLQNEF (211 aa)). Transmembrane regions (helical) follow at residues 468–488 (LLGM…TMFT), 503–523 (FFAF…PVFL), 552–572 (IPAL…AVGL), 579–599 (FFFF…FVTF), 609–629 (LGFT…GFFI), and 728–748 (LWIT…TLLI).

This sequence belongs to the ABC transporter superfamily. ABCG family. Eye pigment precursor importer (TC 3.A.1.204) subfamily.

Its subcellular location is the membrane. This Arabidopsis thaliana (Mouse-ear cress) protein is ABC transporter G family member 2 (ABCG2).